The following is a 1006-amino-acid chain: Multiple C2 domain and transmembrane region protein 9 (1006 aa).

The C2 1 domain occupies 1 to 108 (MSNIKLGVEV…PRSEAAPFNY (108 aa)). The tract at residues 135-156 (VTPSVPTPVPESPQAYSPSPRK) is disordered. 3 C2 domains span residues 251–371 (RGTE…PQWY), 411–536 (SDSS…DRWV), and 579–704 (NSSD…THAY). Ca(2+) contacts are provided by Asp-284, Asp-290, Asp-337, Asp-339, and Asp-344. 2 consecutive transmembrane segments (helical) span residues 842–862 (MLVT…AVIG) and 946–966 (ATAI…ITPF).

It belongs to the MCTP family. Ca(2+) serves as cofactor. Expressed in incipient leaf primordia and roots meristems. Observed in flowers.

It localises to the cell membrane. The protein localises to the cytoplasm. Its function is as follows. May function as a signaling molecule by regulating the trafficking of other regulators. The sequence is that of Multiple C2 domain and transmembrane region protein 9 from Arabidopsis thaliana (Mouse-ear cress).